The primary structure comprises 246 residues: Ribonuclease 3 (246 aa).

The region spanning 18-147 is the RNase III domain; sequence FKELQKKIGI…FIGALYLDQG (130 aa). Glutamate 60 is a binding site for Mg(2+). Aspartate 64 is an active-site residue. Residues aspartate 133 and glutamate 136 each contribute to the Mg(2+) site. Residue glutamate 136 is part of the active site. Residues 173 to 242 enclose the DRBM domain; the sequence is DFKSQLQELV…AQMALQKLKT (70 aa).

It belongs to the ribonuclease III family. As to quaternary structure, homodimer. Mg(2+) serves as cofactor.

The protein resides in the cytoplasm. The catalysed reaction is Endonucleolytic cleavage to 5'-phosphomonoester.. Functionally, digests double-stranded RNA. Involved in the processing of primary rRNA transcript to yield the immediate precursors to the large and small rRNAs (23S and 16S). Processes some mRNAs, and tRNAs when they are encoded in the rRNA operon. Processes pre-crRNA and tracrRNA of type II CRISPR loci if present in the organism. In Geobacillus sp. (strain WCH70), this protein is Ribonuclease 3.